The following is a 528-amino-acid chain: uncharacterized protein (528 aa).

This is an uncharacterized protein from Giardia intestinalis (Giardia lamblia).